The following is a 386-amino-acid chain: Leupaxin (386 aa).

Position 1 is an N-acetylmethionine (Met-1). The short motif at 3–15 (ELDALLEELERST) is the LD motif 1 element. The segment at 12–51 (ERSTLQDSDEYSNSAPLPLDQSSRKESNLDETSKMLSVQD) is disordered. Polar residues predominate over residues 16-26 (LQDSDEYSNSA). Ser-19 bears the Phosphoserine mark. Residue Tyr-22 is modified to Phosphotyrosine. Residues 33 to 44 (SSRKESNLDETS) are compositionally biased toward basic and acidic residues. The residue at position 62 (Tyr-62) is a Phosphotyrosine. 2 consecutive short sequence motifs (LD motif) follow at residues 70–82 (NVYS…KKSP) and 92–103 (QLDELMAHLSEM). Tyr-72 carries the post-translational modification Phosphotyrosine; by LYN. Residue Ser-81 is modified to Phosphoserine. 4 LIM zinc-binding domains span residues 150–209 (GHCA…LFSP), 210–267 (RCAY…AMFS), 268–327 (PKCG…RRGT), and 328–386 (LCHG…LFSL).

It belongs to the paxillin family. In terms of assembly, interacts with unphosphorylated ITGA4. Interacts with AR and SRF. Interacts with PTK2B/PYK2, PTPN22 and PTPN12. Interacts (via LD motif 3) with LYN and the interaction is induced upon B-cell antigen receptor (BCR) activation. Interacts (via LD motif 3) with PTK2/FAK. Phosphorylated on tyrosine residues. Phosphorylation on Tyr-72 is important for its inhibitory function. Bombesin stimulates phosphorylation on Tyr-22, Tyr-62 and Tyr-72.

Its subcellular location is the cytoplasm. The protein resides in the cell junction. The protein localises to the focal adhesion. It is found in the nucleus. It localises to the perinuclear region. Its subcellular location is the cell projection. The protein resides in the podosome. The protein localises to the cell membrane. Transcriptional coactivator for androgen receptor (AR) and serum response factor (SRF). Contributes to the regulation of cell adhesion, spreading and cell migration and acts as a negative regulator in integrin-mediated cell adhesion events. Suppresses the integrin-induced tyrosine phosphorylation of paxillin (PXN). May play a critical role as an adapter protein in the formation of the adhesion zone in osteoclasts. Negatively regulates B-cell antigen receptor (BCR) signaling. The polypeptide is Leupaxin (LPXN) (Oryctolagus cuniculus (Rabbit)).